The following is a 158-amino-acid chain: NADPH-dependent 7-cyano-7-deazaguanine reductase (158 aa).

The active-site Thioimide intermediate is the Cys-56. The active-site Proton donor is Asp-63. Substrate-binding positions include 78–80 (LES) and 97–98 (HE).

Belongs to the GTP cyclohydrolase I family. QueF type 1 subfamily.

Its subcellular location is the cytoplasm. The catalysed reaction is 7-aminomethyl-7-carbaguanine + 2 NADP(+) = 7-cyano-7-deazaguanine + 2 NADPH + 3 H(+). Its pathway is tRNA modification; tRNA-queuosine biosynthesis. Its function is as follows. Catalyzes the NADPH-dependent reduction of 7-cyano-7-deazaguanine (preQ0) to 7-aminomethyl-7-deazaguanine (preQ1). In Rhodopseudomonas palustris (strain TIE-1), this protein is NADPH-dependent 7-cyano-7-deazaguanine reductase.